A 320-amino-acid chain; its full sequence is Mitochondrial glutamate carrier 2 (320 aa).

Solcar repeat units lie at residues 11–97 (LSIS…LRQL), 105–215 (RNLK…LNQL), and 224–313 (ASFT…GIGE). Transmembrane regions (helical) follow at residues 17 to 37 (LINGGIAGLVGVTCVFPIDLA), 66 to 86 (FLGMYRGAAVNLTLVTPEKAI), and 110 to 128 (EMLAGCGAGICQVVITCPM). The residue at position 150 (Ser150) is a Phosphoserine. Helical transmembrane passes span 190 to 210 (GLGATLLRDIPFSIIYFPLFA), 230 to 250 (FVAGCTAGSVAAVAVTPLDVL), and 293 to 313 (ALVIAPLFGIAQGVYFIGIGE).

This sequence belongs to the mitochondrial carrier (TC 2.A.29) family.

It localises to the mitochondrion inner membrane. It catalyses the reaction L-glutamate(in) + H(+)(in) = L-glutamate(out) + H(+)(out). Its function is as follows. Responsible for the transport of glutamate from the cytosol into the mitochondrial matrix with the concomitant import of a proton (symport system). This is Mitochondrial glutamate carrier 2 (Slc25a18) from Mus musculus (Mouse).